Consider the following 66-residue polypeptide: DNA-directed RNA polymerase subunit omega (66 aa).

The protein belongs to the RNA polymerase subunit omega family. In terms of assembly, the RNAP catalytic core consists of 2 alpha, 1 beta, 1 beta' and 1 omega subunit. When a sigma factor is associated with the core the holoenzyme is formed, which can initiate transcription.

The enzyme catalyses RNA(n) + a ribonucleoside 5'-triphosphate = RNA(n+1) + diphosphate. Its function is as follows. Promotes RNA polymerase assembly. Latches the N- and C-terminal regions of the beta' subunit thereby facilitating its interaction with the beta and alpha subunits. This Geobacillus kaustophilus (strain HTA426) protein is DNA-directed RNA polymerase subunit omega.